Reading from the N-terminus, the 241-residue chain is Uridylate kinase (241 aa).

An ATP-binding site is contributed by Gly9–Ser10. Gly44 provides a ligand contact to UMP. Gly45 and Arg49 together coordinate ATP. UMP is bound by residues Asp66 and Ile114–Thr120. ATP contacts are provided by Thr140, Tyr146, and Asp149.

This sequence belongs to the UMP kinase family. In terms of assembly, homohexamer.

The protein resides in the cytoplasm. The catalysed reaction is UMP + ATP = UDP + ADP. It functions in the pathway pyrimidine metabolism; CTP biosynthesis via de novo pathway; UDP from UMP (UMPK route): step 1/1. With respect to regulation, inhibited by UTP. Its function is as follows. Catalyzes the reversible phosphorylation of UMP to UDP. This is Uridylate kinase from Haloquadratum walsbyi (strain DSM 16790 / HBSQ001).